The following is a 202-amino-acid chain: Ras-related protein Rab-18 (202 aa).

GTP-binding residues include Ser-18, Gly-21, Lys-22, Ser-23, Ser-24, Asp-35, Pro-36, Thr-41, Gly-67, Lys-124, Asp-126, and Ala-153. The Effector region motif lies at 38-46 (QAATIGVDF). 2 S-geranylgeranyl cysteine lipidation sites follow: Cys-198 and Cys-200.

This sequence belongs to the small GTPase superfamily. Rab family.

The protein resides in the cell membrane. It catalyses the reaction GTP + H2O = GDP + phosphate + H(+). Its function is as follows. The small GTPases Rab are key regulators of intracellular membrane trafficking, from the formation of transport vesicles to their fusion with membranes. Rabs cycle between an inactive GDP-bound form and an active GTP-bound form that is able to recruit to membranes different sets of downstream effectors directly responsible for vesicle formation, movement, tethering and fusion. This chain is Ras-related protein Rab-18 (RAB18A), found in Lymnaea stagnalis (Great pond snail).